Reading from the N-terminus, the 114-residue chain is UPF0145 protein Acry_1752 (114 aa).

This sequence belongs to the UPF0145 family.

This Acidiphilium cryptum (strain JF-5) protein is UPF0145 protein Acry_1752.